We begin with the raw amino-acid sequence, 296 residues long: Bifunctional protein FolD (296 aa).

NADP(+) contacts are provided by residues 168–170, threonine 197, and valine 238; that span reads GRS.

This sequence belongs to the tetrahydrofolate dehydrogenase/cyclohydrolase family. In terms of assembly, homodimer.

The enzyme catalyses (6R)-5,10-methylene-5,6,7,8-tetrahydrofolate + NADP(+) = (6R)-5,10-methenyltetrahydrofolate + NADPH. It catalyses the reaction (6R)-5,10-methenyltetrahydrofolate + H2O = (6R)-10-formyltetrahydrofolate + H(+). It functions in the pathway one-carbon metabolism; tetrahydrofolate interconversion. In terms of biological role, catalyzes the oxidation of 5,10-methylenetetrahydrofolate to 5,10-methenyltetrahydrofolate and then the hydrolysis of 5,10-methenyltetrahydrofolate to 10-formyltetrahydrofolate. The protein is Bifunctional protein FolD of Desulfotalea psychrophila (strain LSv54 / DSM 12343).